An 870-amino-acid chain; its full sequence is Valine--tRNA ligase (870 aa).

The 'HIGH' region motif lies at 42–52 (PNVTGVLHIGH). Residues 527 to 531 (KMSKS) carry the 'KMSKS' region motif. Residue lysine 530 coordinates ATP. Residues 800–870 (LENVDLSGIL…ISVELQNLRG (71 aa)) are a coiled coil.

This sequence belongs to the class-I aminoacyl-tRNA synthetase family. ValS type 1 subfamily. Monomer.

The protein localises to the cytoplasm. The enzyme catalyses tRNA(Val) + L-valine + ATP = L-valyl-tRNA(Val) + AMP + diphosphate. Functionally, catalyzes the attachment of valine to tRNA(Val). As ValRS can inadvertently accommodate and process structurally similar amino acids such as threonine, to avoid such errors, it has a 'posttransfer' editing activity that hydrolyzes mischarged Thr-tRNA(Val) in a tRNA-dependent manner. The sequence is that of Valine--tRNA ligase from Campylobacter jejuni (strain RM1221).